Reading from the N-terminus, the 335-residue chain is MTAVNDFLTPRSIAVNAINQTHAKVVLEPLERGFGHTLGTALRRILISSMPGCAITEVEIDGVQHEYSSIEGVQEDVINILLNLKGVALKMEDSEETTLELVKKGPGVVTANDIQRDHSVEIVNPDHLICTITGDTELRVKLKVQKGRGYVAADSRQSEDDETRGIGRLQLDASYSPVRRVAYVVEAARVEQRTDLDKLVIDLETDGTIEPEEAIRRAATILQQQIAVFVDLEQDAKPEPKQEREEIDPILLRPVDDLELTVRSANCLKAENIYYIGDLVQRTEVELLKTPNLGKKSLTEIKDVLASKGLSLGMRLENWPPVSLRDDDRLNAKLR.

Positions 1–233 (MTAVNDFLTP…QQIAVFVDLE (233 aa)) are alpha N-terminal domain (alpha-NTD). The alpha C-terminal domain (alpha-CTD) stretch occupies residues 247–335 (IDPILLRPVD…DDDRLNAKLR (89 aa)).

This sequence belongs to the RNA polymerase alpha chain family. In terms of assembly, homodimer. The RNAP catalytic core consists of 2 alpha, 1 beta, 1 beta' and 1 omega subunit. When a sigma factor is associated with the core the holoenzyme is formed, which can initiate transcription.

It catalyses the reaction RNA(n) + a ribonucleoside 5'-triphosphate = RNA(n+1) + diphosphate. In terms of biological role, DNA-dependent RNA polymerase catalyzes the transcription of DNA into RNA using the four ribonucleoside triphosphates as substrates. This chain is DNA-directed RNA polymerase subunit alpha, found in Alcanivorax borkumensis (strain ATCC 700651 / DSM 11573 / NCIMB 13689 / SK2).